Consider the following 38-residue polypeptide: Toxin Bot33 (38 aa).

Intrachain disulfides connect C8–C28, C14–C33, and C18–C35.

This sequence belongs to the short scorpion toxin superfamily. Potassium channel inhibitor family. In terms of tissue distribution, expressed by the venom gland.

The protein resides in the secreted. Its function is as follows. A probable toxin that has no activity on the tested mammalian voltage-gated potassium channels (when tested at 1 uM) and is not toxic to mice. It resembles alpha toxins that block voltage-gated potassium channels. In Buthus occitanus tunetanus (Common European scorpion), this protein is Toxin Bot33.